A 652-amino-acid chain; its full sequence is Aspartate--tRNA ligase, mitochondrial (652 aa).

The N-terminal 46 residues, 1 to 46, are a transit peptide targeting the mitochondrion; the sequence is MYLGSWLNRLGRGLSRPIGKTKQPIWGSLSRSLTLSSQRVPEFSSF. Thr218 carries the post-translational modification Phosphothreonine. Ser241 bears the Phosphoserine mark. The tract at residues 243–246 is aspartate; sequence QQFK. Arg265 lines the L-aspartate pocket. ATP-binding positions include 265-267 and Glu534; that span reads RDE. Arg541 contributes to the L-aspartate binding site. 583–586 is an ATP binding site; that stretch reads GLDR.

It belongs to the class-II aminoacyl-tRNA synthetase family. Type 1 subfamily. In terms of assembly, homodimer.

It localises to the mitochondrion matrix. The protein resides in the mitochondrion membrane. The catalysed reaction is tRNA(Asp) + L-aspartate + ATP = L-aspartyl-tRNA(Asp) + AMP + diphosphate. Catalyzes the attachment of aspartate to tRNA(Asp) in a two-step reaction: aspartate is first activated by ATP to form Asp-AMP and then transferred to the acceptor end of tRNA(Asp). The sequence is that of Aspartate--tRNA ligase, mitochondrial (Dars2) from Rattus norvegicus (Rat).